Consider the following 88-residue polypeptide: Small ribosomal subunit protein bS20 (88 aa).

Over residues 1–16 (MANTHSAKKATRKITR) the composition is skewed to basic residues. The tract at residues 1–20 (MANTHSAKKATRKITRRTAV) is disordered.

The protein belongs to the bacterial ribosomal protein bS20 family.

Binds directly to 16S ribosomal RNA. The protein is Small ribosomal subunit protein bS20 of Nitrobacter hamburgensis (strain DSM 10229 / NCIMB 13809 / X14).